The sequence spans 844 residues: RING finger containing E3 ubiquitin-protein ligase WSV222 (844 aa).

Residue Ala229–Thr236 participates in ATP binding. The segment at Cys308–Arg359 adopts an RING-type; atypical zinc-finger fold.

Interacts with host UBE2E1/UBCH6; this interaction results in WSV222 auto-ubiquitination. Interacts with host tumor suppressor-like protein.

It carries out the reaction S-ubiquitinyl-[E2 ubiquitin-conjugating enzyme]-L-cysteine + [acceptor protein]-L-lysine = [E2 ubiquitin-conjugating enzyme]-L-cysteine + N(6)-ubiquitinyl-[acceptor protein]-L-lysine.. It participates in protein modification; protein ubiquitination. In terms of biological role, probable E3 ubiquitin-protein ligase which accepts ubiquitin from the E2 ubiquitin-conjugating enzyme UBE2E1/UBCH6 in the form of a thioester and then directly transfers the ubiquitin to targeted substrates. Mediates ubiquitination of host tumor-suppressor-like protein (TSL) targeting it for degradation. Might function as an anti-apoptosis protein by counteracting TSL-induced apoptosis. The sequence is that of RING finger containing E3 ubiquitin-protein ligase WSV222 from White spot syndrome virus (isolate Shrimp/China/Tongan/1996) (WSSV).